The primary structure comprises 104 residues: UPF0125 protein PSPTO_4512 (104 aa).

Belongs to the UPF0125 (RnfH) family.

The sequence is that of UPF0125 protein PSPTO_4512 from Pseudomonas syringae pv. tomato (strain ATCC BAA-871 / DC3000).